Consider the following 506-residue polypeptide: UBX domain-containing protein 4 (506 aa).

The interval 1-199 is interaction with UBQLN1; the sequence is MLWFQGAIPA…PAEDLTVRVE (199 aa). Residues 1-411 lie on the Cytoplasmic side of the membrane; it reads MLWFQGAIPA…VPSSSGDIWT (411 aa). 2 stretches are compositionally biased toward polar residues: residues 114–136 and 177–189; these read SLKGETSVTNDKQSESSVSTPSA and SLSQEPPGCSNQR. A disordered region spans residues 114–193; the sequence is SLKGETSVTN…GCSNQRPAED (80 aa). Residues 313 to 391 form the UBX domain; that stretch reads DRSTIARIQF…ELAPSASVVL (79 aa). An intramembrane segment occupies 412 to 432; it reads LLGTVLYPFLAIWRLISNFLF. At 433 to 506 the chain is on the cytoplasmic side; sequence SNPPPAQTSA…TWNGNSTQQM (74 aa). The segment at 437–506 is disordered; sequence PAQTSARATS…TWNGNSTQQM (70 aa). Residues 444-456 show a composition bias toward low complexity; the sequence is ATSTEPSNSASSS. The segment covering 457–489 has biased composition (basic and acidic residues); it reads KSEKREPVRKRVLEKRGEDFKKEGKIYRLRTQD. Threonine 487 carries the phosphothreonine modification. Polar residues predominate over residues 496-506; that stretch reads NTWNGNSTQQM.

In terms of assembly, directly interacts with VCP. Interacts with UBQLN1. Forms a complex with VCP and UBQLN1.

Its subcellular location is the endoplasmic reticulum membrane. The protein resides in the nucleus envelope. Functionally, involved in endoplasmic reticulum-associated protein degradation (ERAD). Acts as a platform to recruit both UBQLN1 and VCP to the ER during ERAD. The polypeptide is UBX domain-containing protein 4 (Ubxn4) (Rattus norvegicus (Rat)).